Reading from the N-terminus, the 292-residue chain is Homoserine kinase (292 aa).

84 to 94 provides a ligand contact to ATP; that stretch reads PLSRGLGSSSA.

It belongs to the GHMP kinase family. Homoserine kinase subfamily.

It is found in the cytoplasm. The catalysed reaction is L-homoserine + ATP = O-phospho-L-homoserine + ADP + H(+). It participates in amino-acid biosynthesis; L-threonine biosynthesis; L-threonine from L-aspartate: step 4/5. In terms of biological role, catalyzes the ATP-dependent phosphorylation of L-homoserine to L-homoserine phosphate. This chain is Homoserine kinase, found in Campylobacter jejuni subsp. doylei (strain ATCC BAA-1458 / RM4099 / 269.97).